The chain runs to 1409 residues: DNA-directed RNA polymerase subunit beta' (1409 aa).

Zn(2+)-binding residues include Cys-70, Cys-72, Cys-85, and Cys-88. 3 residues coordinate Mg(2+): Asp-458, Asp-460, and Asp-462. 4 residues coordinate Zn(2+): Cys-813, Cys-887, Cys-894, and Cys-897.

The protein belongs to the RNA polymerase beta' chain family. The RNAP catalytic core consists of 2 alpha, 1 beta, 1 beta' and 1 omega subunit. When a sigma factor is associated with the core the holoenzyme is formed, which can initiate transcription. Requires Mg(2+) as cofactor. Zn(2+) is required as a cofactor.

It catalyses the reaction RNA(n) + a ribonucleoside 5'-triphosphate = RNA(n+1) + diphosphate. In terms of biological role, DNA-dependent RNA polymerase catalyzes the transcription of DNA into RNA using the four ribonucleoside triphosphates as substrates. This chain is DNA-directed RNA polymerase subunit beta', found in Delftia acidovorans (strain DSM 14801 / SPH-1).